A 420-amino-acid polypeptide reads, in one-letter code: UDP-N-acetylglucosamine 1-carboxyvinyltransferase (420 aa).

Residue lysine 22–asparagine 23 participates in phosphoenolpyruvate binding. Residue arginine 94 participates in UDP-N-acetyl-alpha-D-glucosamine binding. The Proton donor role is filled by cysteine 118. 2-(S-cysteinyl)pyruvic acid O-phosphothioketal is present on cysteine 118. 2 residues coordinate UDP-N-acetyl-alpha-D-glucosamine: aspartate 306 and isoleucine 328.

This sequence belongs to the EPSP synthase family. MurA subfamily.

The protein localises to the cytoplasm. The enzyme catalyses phosphoenolpyruvate + UDP-N-acetyl-alpha-D-glucosamine = UDP-N-acetyl-3-O-(1-carboxyvinyl)-alpha-D-glucosamine + phosphate. The protein operates within cell wall biogenesis; peptidoglycan biosynthesis. Cell wall formation. Adds enolpyruvyl to UDP-N-acetylglucosamine. In Jannaschia sp. (strain CCS1), this protein is UDP-N-acetylglucosamine 1-carboxyvinyltransferase.